The primary structure comprises 2971 residues: Reticulocyte-binding protein homolog 1 (2971 aa).

Positions 1-20 are cleaved as a signal peptide; that stretch reads MQRWIFCNIVLHILIYLAEF. Residues 21 to 2897 lie on the Extracellular side of the membrane; sequence SHEQESYSSN…KKQKNGNHER (2877 aa). The disordered stretch occupies residues 30–50; sequence NEKIRKDYSDDNNYEPTPSYE. N-linked (GlcNAc...) asparagine glycans are attached at residues asparagine 70, asparagine 78, asparagine 87, asparagine 135, asparagine 286, asparagine 384, and asparagine 417. Residues 500–833 are erythrocyte binding domain (EBD); sequence LQIVQQKLLE…MQQGYNNLTN (334 aa). LRR repeat units follow at residues 528-553 and 607-633; these read YKNI…NIKD and LNNL…ILQK. The N-linked (GlcNAc...) asparagine glycan is linked to asparagine 685. 2 LRR repeats span residues 736-758 and 785-808; these read IDTI…VYTD and QETL…LLKE. N-linked (GlcNAc...) asparagine glycans are attached at residues asparagine 830, asparagine 892, asparagine 1000, and asparagine 1010. LRR repeat units lie at residues 993 to 1018 and 1356 to 1381; these read LKIL…TLND and LRNI…AHKE. N-linked (GlcNAc...) asparagine glycosylation occurs at asparagine 1425. Residues 1466 to 1489 form an LRR 7 repeat; that stretch reads AKYMENIDTYKNNIEIISKQINPE. Residue asparagine 1496 is glycosylated (N-linked (GlcNAc...) asparagine). 3 LRR repeats span residues 1512-1537, 1586-1609, and 1611-1636; these read YKQI…ELQN, SQNI…LEEE, and EQMK…AFIN. Residues asparagine 1664, asparagine 1692, asparagine 1718, asparagine 1816, and asparagine 1844 are each glycosylated (N-linked (GlcNAc...) asparagine). LRR repeat units lie at residues 1700-1723 and 1809-1834; these read LQEL…TIKY and LKLF…SIQN. An LRR 13 repeat occupies 1880–1903; the sequence is QNEIRNMNLEKNFMLDKSKKIDEE. N-linked (GlcNAc...) asparagine glycans are attached at residues asparagine 1913 and asparagine 1918. One copy of the LRR 14 repeat lies at 1944–1967; it reads KENIEKIKQEINTLSDVFKKPFFF. Residues asparagine 2054, asparagine 2207, asparagine 2289, asparagine 2300, asparagine 2338, and asparagine 2405 are each glycosylated (N-linked (GlcNAc...) asparagine). One copy of the LRR 15 repeat lies at 2523 to 2548; sequence IKDIDNVFIKIQNNKFEQIQKYIEII. 2 N-linked (GlcNAc...) asparagine glycosylation sites follow: asparagine 2598 and asparagine 2752. One copy of the LRR 16 repeat lies at 2731-2754; sequence ENIFDNIQLKKKDIDDIIININNT. Basic and acidic residues-rich tracts occupy residues 2773–2782 and 2795–2804; these read KVDEKSEINN and QKNKIKDHNL. Disordered stretches follow at residues 2773–2825 and 2840–2862; these read KVDE…MKEQ and HHVH…LQEQ. An N-linked (GlcNAc...) asparagine glycan is attached at asparagine 2811. Residues 2814-2825 show a composition bias toward basic and acidic residues; it reads EESHQNEQMKEQ. Residues 2898 to 2918 traverse the membrane as a helical segment; it reads MYFASGIVVSILFLSSLGFVI. At 2919–2971 the chain is on the cytoplasmic side; it reads NSKNNKQEYDKEQEKQQQNDFVCDNNKMDDKSTQKYGRNQEEVMEISFDNDYI.

May in part interact with AMA1 in the moving tight junction between the parasite and the erythrocyte membranes; the interaction may facilitate junction formation and active invasion. Post-translationally, proteolytically processed into multiple fragments following schizont rupture. In the mature schizont stage prior to merozoite release, full length RH1 is processed post-Golgi into a 240 kDa N-terminal form and a 120 kDa C-terminal form containing the transmembrane region. Both forms appear not to form a complex. However, they appear to remain in close proximity in late schizonts. Following merozoite invasion of host erythrocytes, the 240 kDa form is further processed into a 140 kDa form which may be involved in the disengagement of the ligand-receptor complex required during the invasion process. Also, the 120 kDa is further cleaved into a 110 kDa form and a transmembrane 9 kDa form probably by ROM4.

It localises to the cell membrane. The protein localises to the secreted. Its subcellular location is the cell junction. The protein resides in the tight junction. It is found in the cytoplasmic vesicle. It localises to the secretory vesicle. The protein localises to the rhoptry. In terms of biological role, during the asexual blood stage, binds to a sialic acid containing receptor on the surface of the host erythrocyte and thus is involved in merozoite invasion. Binds erythrocytes via a neuraminidase sensitive and trypsin-, chymotrypsin-resistant receptor. After merozoite attachment and reorientation, RH1 binding to its erythrocyte receptor triggers an increase in intracellular Ca(2+) within the parasite resulting in the release of microneme proteins such as EBA175 which in turn leads to the formation of the tight junction between parasite and host cell. The polypeptide is Reticulocyte-binding protein homolog 1 (Plasmodium falciparum (isolate 3D7)).